A 259-amino-acid polypeptide reads, in one-letter code: Sorbitol-6-phosphate 2-dehydrogenase (259 aa).

4-33 (VAVVIGGGQTLGAFLCHGLAAEGYRVAVVD) contributes to the NAD(+) binding site. S141 lines the substrate pocket. The active-site Proton acceptor is Y154.

Belongs to the short-chain dehydrogenases/reductases (SDR) family. As to quaternary structure, homotetramer.

The catalysed reaction is D-sorbitol 6-phosphate + NAD(+) = beta-D-fructose 6-phosphate + NADH + H(+). It functions in the pathway carbohydrate metabolism; D-sorbitol degradation; D-fructose 6-phosphate from D-sorbitol 6-phosphate: step 1/1. The sequence is that of Sorbitol-6-phosphate 2-dehydrogenase (srlD) from Escherichia coli (strain K12).